We begin with the raw amino-acid sequence, 539 residues long: MLRPVSIDDLISDTVPAKKPRFLIKKRTFPQPEEEEASKALSHTVIKRKDNYRNLDEDELYEEQVSNEPDDLLFLARKSADLLKKRQNEDESIVDNYLGKHWSEKKYEEMSTRDWRILSEDFNISSKGGTVEKPLRNWHELKLIPEDLLNIITNDLHYNEPTSIQRSTIPNVINNRDFIGVASTGSGKTLAFLLPILIKLHGIPPLNSITKHDGPLALVLAPTRELAQQIQHEGQSITKLWKRPCNIVSIVGGHSLEEISANLRDGCDILVATPGRLLDCLDSHLLFLKQVNTLVLDEADKMIDFGFEDQLTTILAKTETISNRQTMMFTATFSPTIEKVANGYLKKPSYVTVGGEESKPKIKQIVRYVPDEEEKLKILVKDFLPNYKAPIIIFINYKRTADWLFDKLREARFRATTLHGSKSQEQREHSLSLLRNGKVDILIATDVAGRGIDIPNVSLVVNLQFPKSFDSFVHRVGRTGRAGKTGTALTFLTEEEDHSAMAKLFDYVKKNDFTGENYISKEAMSKYNVDKSSYKPIII.

The Q motif signature appears at 136 to 166 (RNWHELKLIPEDLLNIITNDLHYNEPTSIQR). The region spanning 169–351 (IPNVINNRDF…NGYLKKPSYV (183 aa)) is the Helicase ATP-binding domain. 182–189 (ASTGSGKT) contacts ATP. The DEAD box motif lies at 297 to 300 (DEAD). The region spanning 361 to 525 (KIKQIVRYVP…ENYISKEAMS (165 aa)) is the Helicase C-terminal domain.

Belongs to the DEAD box helicase family. DDX23/PRP28 subfamily. In terms of assembly, component of the U5 snRNP complex.

The protein resides in the cytoplasm. The protein localises to the nucleus. The catalysed reaction is ATP + H2O = ADP + phosphate + H(+). In terms of biological role, ATP-dependent RNA helicase involved in mRNA splicing. May destabilize the U1/5'-splice site duplex to permit an effective competition for the 5'-splice site by the U6 snRNA, resulting in the switch between U1 and U6 at the 5'-splice site. May also act to unwind the U4/U6 base-pairing interaction in the U4/U6/U5 snRNP, facilitating the first covalent step of splicing. The protein is Pre-mRNA-splicing ATP-dependent RNA helicase PRP28 (PRP28) of Kluyveromyces lactis (strain ATCC 8585 / CBS 2359 / DSM 70799 / NBRC 1267 / NRRL Y-1140 / WM37) (Yeast).